Here is a 332-residue protein sequence, read N- to C-terminus: Methionyl-tRNA formyltransferase (332 aa).

A (6S)-5,6,7,8-tetrahydrofolate-binding site is contributed by 114 to 117 (SLLP).

This sequence belongs to the Fmt family.

It carries out the reaction L-methionyl-tRNA(fMet) + (6R)-10-formyltetrahydrofolate = N-formyl-L-methionyl-tRNA(fMet) + (6S)-5,6,7,8-tetrahydrofolate + H(+). Attaches a formyl group to the free amino group of methionyl-tRNA(fMet). The formyl group appears to play a dual role in the initiator identity of N-formylmethionyl-tRNA by promoting its recognition by IF2 and preventing the misappropriation of this tRNA by the elongation apparatus. In Corynebacterium aurimucosum (strain ATCC 700975 / DSM 44827 / CIP 107346 / CN-1) (Corynebacterium nigricans), this protein is Methionyl-tRNA formyltransferase.